A 387-amino-acid polypeptide reads, in one-letter code: Phosphoglycerate kinase (387 aa).

Residues 21-23, R36, 59-62, R113, and R146 contribute to the substrate site; these read DLN and HLGR. ATP is bound by residues K197, E314, and 340-343; that span reads GGDT.

Belongs to the phosphoglycerate kinase family. Monomer.

Its subcellular location is the cytoplasm. It catalyses the reaction (2R)-3-phosphoglycerate + ATP = (2R)-3-phospho-glyceroyl phosphate + ADP. It participates in carbohydrate degradation; glycolysis; pyruvate from D-glyceraldehyde 3-phosphate: step 2/5. This chain is Phosphoglycerate kinase (pgk), found in Vibrio cholerae serotype O1 (strain ATCC 39541 / Classical Ogawa 395 / O395).